The chain runs to 62 residues: Large ribosomal subunit protein uL29 (62 aa).

It belongs to the universal ribosomal protein uL29 family.

This chain is Large ribosomal subunit protein uL29, found in Ruthia magnifica subsp. Calyptogena magnifica.